The primary structure comprises 573 residues: DNA ligase (573 aa).

Glu248 contributes to the ATP binding site. Lys250 functions as the N6-AMP-lysine intermediate in the catalytic mechanism. Positions 255, 270, 299, 340, 432, and 438 each coordinate ATP.

Belongs to the ATP-dependent DNA ligase family. Requires Mg(2+) as cofactor.

The enzyme catalyses ATP + (deoxyribonucleotide)n-3'-hydroxyl + 5'-phospho-(deoxyribonucleotide)m = (deoxyribonucleotide)n+m + AMP + diphosphate.. Its function is as follows. DNA ligase that seals nicks in double-stranded DNA during DNA replication, DNA recombination and DNA repair. This is DNA ligase from Methanocaldococcus jannaschii (strain ATCC 43067 / DSM 2661 / JAL-1 / JCM 10045 / NBRC 100440) (Methanococcus jannaschii).